Reading from the N-terminus, the 379-residue chain is Putative nucleosome assembly protein C2D10.11C (379 aa).

Residues 1 to 10 (MSKGPGDFKK) are compositionally biased toward basic and acidic residues. Disordered regions lie at residues 1 to 30 (MSKG…DVHL) and 345 to 379 (SDFN…EISD). The span at 16–28 (AAQTPQNTPSSDV) shows a compositional bias: polar residues.

Belongs to the nucleosome assembly protein (NAP) family.

The protein resides in the nucleus. This is Putative nucleosome assembly protein C2D10.11C from Schizosaccharomyces pombe (strain 972 / ATCC 24843) (Fission yeast).